A 636-amino-acid chain; its full sequence is Nuclear receptor subfamily 2 group C member 1 (636 aa).

Positions 149–224 (VELCVVCGDK…LGMKQDSVQC (76 aa)) form a DNA-binding region, nuclear receptor. 2 consecutive NR C4-type zinc fingers follow at residues 152-172 (CVVC…CEGC) and 188-207 (CRGS…CQYC). Positions 382–623 (ECVGSNSNLT…SIIPYILRME (242 aa)) constitute an NR LBD domain.

The protein belongs to the nuclear hormone receptor family. NR2 subfamily.

It is found in the nucleus. In terms of biological role, orphan nuclear receptor. Binds the IR7 element in the promoter of its own gene in an autoregulatory negative feedback mechanism. Primarily repressor of a broad range of genes. Binds to hormone response elements (HREs) consisting of two 5'-AGGTCA-3' half site direct repeat consensus sequences. The sequence is that of Nuclear receptor subfamily 2 group C member 1 from Xenopus tropicalis (Western clawed frog).